A 355-amino-acid chain; its full sequence is DnaJ homolog dnj-20 (355 aa).

Residues 1 to 21 (MRILNVSLLVLASSLVAFVEC) form the signal peptide. Positions 24-89 (DFYKILGVAK…EKRAMYDRHG (66 aa)) constitute a J domain.

The sequence is that of DnaJ homolog dnj-20 from Caenorhabditis elegans.